The chain runs to 319 residues: Epoxyqueuosine reductase (319 aa).

Residue Asp128 is the Proton donor of the active site. Residues 173 to 202 (EANDPHPNYCGTCTRCLSACPTAALVEPAV) form the 4Fe-4S ferredoxin-type domain. Residues Cys182, Cys185, Cys188, Cys192, Cys208, Cys236, Cys239, and Cys243 each coordinate [4Fe-4S] cluster.

It belongs to the QueG family. In terms of assembly, monomer. It depends on cob(II)alamin as a cofactor. [4Fe-4S] cluster is required as a cofactor.

The protein localises to the cytoplasm. It carries out the reaction epoxyqueuosine(34) in tRNA + AH2 = queuosine(34) in tRNA + A + H2O. Its pathway is tRNA modification; tRNA-queuosine biosynthesis. Functionally, catalyzes the conversion of epoxyqueuosine (oQ) to queuosine (Q), which is a hypermodified base found in the wobble positions of tRNA(Asp), tRNA(Asn), tRNA(His) and tRNA(Tyr). This Gloeobacter violaceus (strain ATCC 29082 / PCC 7421) protein is Epoxyqueuosine reductase.